Consider the following 435-residue polypeptide: E3 ubiquitin-protein ligase RNFT1 (435 aa).

Positions 1–62 (MPLFLLSLPT…SSEDASTPQC (62 aa)) are disordered. Positions 16–34 (GHERRQRPEAKTSGSEKKY) are enriched in basic and acidic residues. Positions 40-62 (ANRSQLHSPPGTGSSEDASTPQC) are enriched in polar residues. 6 helical membrane-spanning segments follow: residues 158 to 178 (ILIL…LGIG), 203 to 223 (IQCA…YYTF), 233 to 253 (IFLN…IVGI), 256 to 276 (FILK…PSFI), 298 to 318 (TFVP…FGNV), and 323 to 343 (LGIL…FGHL). The required for ubiquitin ligase activity and for protection against ER stress-induced cell death stretch occupies residues 368–419 (CSDVDDICSICQAEFQKPILLICQHIFCEECMTLWFNREKTCPLCRTVISDH). The RING-type zinc-finger motif lies at 375–413 (CSICQAEFQKPILLICQHIFCEECMTLWFNREKTCPLCR).

As to expression, expressed at highest levels in testis, lower levels in heart, liver, lung, and kidney. Not detected in brain, ovary, and uterus. Down-regulated in testis from patients with maturation arrest (MA) or Sertoli cell-only syndrome (SCOS). Ubiquitously expressed with high expression in testis.

The protein localises to the endoplasmic reticulum membrane. It catalyses the reaction S-ubiquitinyl-[E2 ubiquitin-conjugating enzyme]-L-cysteine + [acceptor protein]-L-lysine = [E2 ubiquitin-conjugating enzyme]-L-cysteine + N(6)-ubiquitinyl-[acceptor protein]-L-lysine.. It participates in protein modification; protein ubiquitination. Its function is as follows. E3 ubiquitin-protein ligase that acts in the endoplasmic reticulum (ER)-associated degradation (ERAD) pathway, which targets misfolded proteins that accumulate in the endoplasmic reticulum (ER) for ubiquitination and subsequent proteasome-mediated degradation. Protects cells from ER stress-induced apoptosis. The protein is E3 ubiquitin-protein ligase RNFT1 (RNFT1) of Homo sapiens (Human).